A 256-amino-acid polypeptide reads, in one-letter code: Protein YABBY 4 (256 aa).

A C4-type zinc finger spans residues 30-57 (CNCCDTILAVGVPCSSLFKTVTVRCGHC). Residues 127–168 (SCASNAPAMQMPPAKPVQQEPELPKNAPASANRPPEKRQRVP) are disordered.

It belongs to the YABBY family. Preferentially expressed in immature organs containing meristems and organ primordia. Expressed in phloem of developing vascular tissues of young seedling shoots. Expressed in the phloem of midvein vasculature of young leaves. Does not show polar expression pattern in leaf primordia.

The protein localises to the nucleus. Its function is as follows. Seems to be associated with phloem cell differentiation. The polypeptide is Protein YABBY 4 (YAB4) (Oryza sativa subsp. japonica (Rice)).